The following is a 238-amino-acid chain: Purine nucleoside phosphorylase DeoD-type (238 aa).

Histidine 5 is an a purine D-ribonucleoside binding site. Phosphate-binding positions include glycine 21, arginine 25, arginine 44, and 88–91; that span reads RVGS. Residues 180-182 and 204-205 each bind a purine D-ribonucleoside; these read EME and SD. Residue aspartate 205 is the Proton donor of the active site.

It belongs to the PNP/UDP phosphorylase family. As to quaternary structure, homohexamer; trimer of homodimers.

The enzyme catalyses a purine D-ribonucleoside + phosphate = a purine nucleobase + alpha-D-ribose 1-phosphate. The catalysed reaction is a purine 2'-deoxy-D-ribonucleoside + phosphate = a purine nucleobase + 2-deoxy-alpha-D-ribose 1-phosphate. Its function is as follows. Catalyzes the reversible phosphorolytic breakdown of the N-glycosidic bond in the beta-(deoxy)ribonucleoside molecules, with the formation of the corresponding free purine bases and pentose-1-phosphate. This Proteus mirabilis (strain HI4320) protein is Purine nucleoside phosphorylase DeoD-type.